Here is a 262-residue protein sequence, read N- to C-terminus: MSRIANCFAELAGKKALIPFITAGDPHPGLTVSLMHGLVDGGADIIELGVPFSDPMADGPVIQRASERALKHKVGLRHVLEMVAEFRRDNATTPVVLMGYLNPLCAMGYTEFASRAKAAGVDGVLTVDCPPEEAAELESALDAHGLDTVFLVAPTTPPSRVAEIAKLARGYVYYVSLKGVTGAGHLDIEDVARKIAALRQQLPLPIGVGFGIRDAATAKAIAAAADAVVVGSRLVQEIEAATPETAREQLTRLVAELKAAIR.

Residues glutamate 47 and aspartate 58 each act as proton acceptor in the active site.

This sequence belongs to the TrpA family. Tetramer of two alpha and two beta chains.

It carries out the reaction (1S,2R)-1-C-(indol-3-yl)glycerol 3-phosphate + L-serine = D-glyceraldehyde 3-phosphate + L-tryptophan + H2O. Its pathway is amino-acid biosynthesis; L-tryptophan biosynthesis; L-tryptophan from chorismate: step 5/5. Its function is as follows. The alpha subunit is responsible for the aldol cleavage of indoleglycerol phosphate to indole and glyceraldehyde 3-phosphate. This Chromobacterium violaceum (strain ATCC 12472 / DSM 30191 / JCM 1249 / CCUG 213 / NBRC 12614 / NCIMB 9131 / NCTC 9757 / MK) protein is Tryptophan synthase alpha chain.